Reading from the N-terminus, the 466-residue chain is Sucrose-6-phosphate hydrolase (466 aa).

Residues 38–41, Gln-57, 100–101, 159–160, and Glu-218 each bind substrate; these read LLND, YS, and RD. Asp-41 is a catalytic residue.

Its subcellular location is the cytoplasm. The catalysed reaction is Hydrolysis of terminal non-reducing beta-D-fructofuranoside residues in beta-D-fructofuranosides.. The protein operates within glycan biosynthesis; sucrose metabolism. Functionally, hydrolyzes sucrose and sucrose-6P, but fails to hydrolyze any of the phosphorylated isomers of sucrose and other phospho-D-glucosides, including maltose-6'P and trehalose-6P. This is Sucrose-6-phosphate hydrolase (scrB) from Klebsiella pneumoniae.